The sequence spans 125 residues: Large ribosomal subunit protein bL19 (125 aa).

It belongs to the bacterial ribosomal protein bL19 family.

In terms of biological role, this protein is located at the 30S-50S ribosomal subunit interface and may play a role in the structure and function of the aminoacyl-tRNA binding site. The sequence is that of Large ribosomal subunit protein bL19 from Ehrlichia canis (strain Jake).